The primary structure comprises 371 residues: DNA primase DnaG (371 aa).

The Toprim domain occupies 173–248; it reads DEIILVEGRA…DIDYVAVAPP (76 aa). Mg(2+)-binding residues include Glu179, Asp221, and Asp223.

The protein belongs to the archaeal DnaG primase family. As to quaternary structure, forms a ternary complex with MCM helicase and DNA. Component of the archaeal exosome complex. Mg(2+) is required as a cofactor.

It catalyses the reaction ssDNA + n NTP = ssDNA/pppN(pN)n-1 hybrid + (n-1) diphosphate.. In terms of biological role, RNA polymerase that catalyzes the synthesis of short RNA molecules used as primers for DNA polymerase during DNA replication. Also part of the exosome, which is a complex involved in RNA degradation. Acts as a poly(A)-binding protein that enhances the interaction between heteromeric, adenine-rich transcripts and the exosome. This is DNA primase DnaG from Nanoarchaeum equitans (strain Kin4-M).